The sequence spans 84 residues: Carboxysome shell vertex protein CsoS4B (84 aa).

Positions 1–77 constitute a BMV domain; it reads MQILQVKKQL…TDLTVGGIID (77 aa).

Belongs to the CcmL/EutN family. CsoS4 subfamily. In terms of assembly, homopentamer.

The protein localises to the carboxysome. In terms of biological role, probably forms vertices in the carboxysome, a polyhedral inclusion where RuBisCO (ribulose bisphosphate carboxylase, cbbL-cbbS) is sequestered. Has been modeled to induce curvature upon insertion into an otherwise flat hexagonal layer of major carboxysome subunits. The polypeptide is Carboxysome shell vertex protein CsoS4B (Hydrogenovibrio crunogenus (strain DSM 25203 / XCL-2) (Thiomicrospira crunogena)).